We begin with the raw amino-acid sequence, 309 residues long: MTKKVGLLVMAYGTPYKDEDIERYYTDIRHGHKPSEEMIADLRGRYHAIGGLSPLAKITEAQAYGLEKALNESQDEVEFKAYIGLKHIEPFIEDAVEAMHKDGIEEAISIVLAPHYSSFSVEAYNKRAKDAADKLGGLRIKAINDWYKQPKFIQMWADRINETAKQIPADELLDTVLIVSAHSLPEKIKQHNDPYPDQLQETADFIFEKVVVPHYALGWQSEGKTGEPWLGPDVQDLTRELYGREKYKHFIYTPVGFVAEHLEVLYDNDYECKVVTDEVGATYHRPPMPNSDPEFLEVLRTVVWEKYSN.

Fe-coproporphyrin III-binding positions include Y12, R29, 45-46 (RY), S53, and Y124. Fe(2+)-binding residues include H182 and E263.

The protein belongs to the ferrochelatase family.

Its subcellular location is the cytoplasm. It carries out the reaction Fe-coproporphyrin III + 2 H(+) = coproporphyrin III + Fe(2+). The protein operates within porphyrin-containing compound metabolism; protoheme biosynthesis. Functionally, involved in coproporphyrin-dependent heme b biosynthesis. Catalyzes the insertion of ferrous iron into coproporphyrin III to form Fe-coproporphyrin III. The protein is Coproporphyrin III ferrochelatase of Listeria monocytogenes serotype 4b (strain F2365).